Consider the following 58-residue polypeptide: Single-pass membrane and coiled-coil domain-containing protein 4 homolog (58 aa).

The stretch at 1 to 31 (MRQLKGKVKETRKQKKERKLDNLETQAKIRT) forms a coiled coil. A helical membrane pass occupies residues 31 to 51 (TVVLPALGVLAVFLVLFVYLK).

The protein belongs to the SMCO4 family.

It localises to the membrane. This Drosophila melanogaster (Fruit fly) protein is Single-pass membrane and coiled-coil domain-containing protein 4 homolog.